Reading from the N-terminus, the 76-residue chain is Toxin Acra III-2 (76 aa).

The LCN-type CS-alpha/beta domain maps to 3 to 67; it reads VPGNYPLNTY…IWDAVKNHCT (65 aa). Cystine bridges form between Cys18–Cys41, Cys27–Cys46, and Cys31–Cys48.

It belongs to the long (3 C-C) scorpion toxin superfamily. Sodium channel inhibitor family. Beta subfamily. In terms of tissue distribution, expressed by the venom gland.

Its subcellular location is the secreted. Functionally, binds to sodium channels (Nav) and affects the channel activation process. The chain is Toxin Acra III-2 from Androctonus crassicauda (Arabian fat-tailed scorpion).